Here is a 277-residue protein sequence, read N- to C-terminus: 5'-nucleotidase SurE (277 aa).

Asp14, Asp15, Ser46, and Asn104 together coordinate a divalent metal cation.

It belongs to the SurE nucleotidase family. The cofactor is a divalent metal cation.

It localises to the cytoplasm. The enzyme catalyses a ribonucleoside 5'-phosphate + H2O = a ribonucleoside + phosphate. Functionally, nucleotidase that shows phosphatase activity on nucleoside 5'-monophosphates. The protein is 5'-nucleotidase SurE of Picosynechococcus sp. (strain ATCC 27264 / PCC 7002 / PR-6) (Agmenellum quadruplicatum).